A 209-amino-acid chain; its full sequence is MGSSSGSDVEAGFAKLQGEDFEYYMQTYSIILGRNSKKSTVDVDLSSLGGGMNISRHHARIFYDFQRRRFNLEVLGKNGCFVEGVLHLPGNPPIKLDSQDLLQIGDKEFYFLLPVRSILGGGPPIGPKQNVNYPVAAHYGGIGKKGGLFRGREREYYDEEEYDDDDDDDDGTGGKKMRRCDGAEGGGGYGGYGSCGSSGKASISGQLGQ.

Positions 30 to 87 (IILGRNSKKSTVDVDLSSLGGGMNISRHHARIFYDFQRRRFNLEVLGKNGCFVEGVLH) constitute an FHA domain. Over residues 157-171 (YDEEEYDDDDDDDDG) the composition is skewed to acidic residues. A disordered region spans residues 157–209 (YDEEEYDDDDDDDDGTGGKKMRRCDGAEGGGGYGGYGSCGSSGKASISGQLGQ). Residues 183-196 (AEGGGGYGGYGSCG) show a composition bias toward gly residues. A compositionally biased stretch (polar residues) spans 200–209 (KASISGQLGQ).

In terms of tissue distribution, expressed in roots, stems, leaves, young flower buds and open flowers.

It is found in the nucleus. Its function is as follows. Transcription regulator that may be involved in the control of the pre-rRNA processing machinery. Can rescue the phenotypes of slow growth and defective rRNA processing in the yeast fhl1 null mutant. Shows transactivation activity in yeast. The polypeptide is Transcriptional activator FHA1 (Nicotiana tabacum (Common tobacco)).